Here is a 709-residue protein sequence, read N- to C-terminus: Polyribonucleotide nucleotidyltransferase (709 aa).

2 residues coordinate Mg(2+): Asp486 and Asp492. The 60-residue stretch at 553–612 (PRIHTIKINPDKIKDVIGKGGSVIRALTEETGTTIEIEDDGTVKIAATDGEKAKHAISRI) folds into the KH domain. The 69-residue stretch at 622–690 (GRIYAGKVTR…RQGRVRLSIK (69 aa)) folds into the S1 motif domain.

This sequence belongs to the polyribonucleotide nucleotidyltransferase family. As to quaternary structure, component of the RNA degradosome, which is a multiprotein complex involved in RNA processing and mRNA degradation. Mg(2+) is required as a cofactor.

Its subcellular location is the cytoplasm. It carries out the reaction RNA(n+1) + phosphate = RNA(n) + a ribonucleoside 5'-diphosphate. Its function is as follows. Involved in mRNA degradation. Catalyzes the phosphorolysis of single-stranded polyribonucleotides processively in the 3'- to 5'-direction. The sequence is that of Polyribonucleotide nucleotidyltransferase from Photorhabdus luminescens (Xenorhabdus luminescens).